The primary structure comprises 454 residues: MMATSKRGTWATIRRIAASDRISGLIMLGFALAGLLLANLPFTAHAFEQLENFHIAIPHTNIDMGLGHWVQDGLLTVFFLTVGLELKQELTTGSLSNPKAAAVPMLCAVGGMLAPPVLFIGVISLFAAAGSGQLVIASGTSFSFAQMSNGWAVPTATDIAFSLAVLALFAKALPGSIRAFLMTLATVDDLLAIILIAVFFSSVNAWYWFLGIAVCAVVWYFLVRMRKVPWLAVAIVGVLAWVMMFEAGVHPTLAGVLVGLLTPAHERFGEKTPRAERYADKLQPFSALLALPIFALFATGVHFESLTLALFVSPVVVAVMVALVVGKPLGIMTTAWLSTHVGGLKMAKGLRVRDMFPAACACGIGFTVSFLIASLAYQDAELSAEARFGVLVGSMVAAVISGILLSRQSKRFELEDGTKHKHHTGDEDAMNEVETVLEDGTVVVSQIIGTHQEQ.

10 consecutive transmembrane segments (helical) span residues 22–42 (ISGL…NLPF), 64–84 (MGLG…TVGL), 106–126 (LCAV…ISLF), 150–170 (GWAV…ALFA), 190–210 (LLAI…YWFL), 228–248 (VPWL…FEAG), 284–304 (PFSA…VHFE), 306–326 (LTLA…LVVG), 355–375 (MFPA…IASL), and 386–406 (ARFG…ILLS).

It belongs to the NhaA Na(+)/H(+) (TC 2.A.33) antiporter family.

It localises to the cell membrane. It carries out the reaction Na(+)(in) + 2 H(+)(out) = Na(+)(out) + 2 H(+)(in). In terms of biological role, na(+)/H(+) antiporter that extrudes sodium in exchange for external protons. The chain is Na(+)/H(+) antiporter NhaA from Bifidobacterium adolescentis (strain ATCC 15703 / DSM 20083 / NCTC 11814 / E194a).